The following is an 89-amino-acid chain: Small ribosomal subunit protein uS15 (89 aa).

The protein belongs to the universal ribosomal protein uS15 family. In terms of assembly, part of the 30S ribosomal subunit. Forms a bridge to the 50S subunit in the 70S ribosome, contacting the 23S rRNA.

One of the primary rRNA binding proteins, it binds directly to 16S rRNA where it helps nucleate assembly of the platform of the 30S subunit by binding and bridging several RNA helices of the 16S rRNA. Its function is as follows. Forms an intersubunit bridge (bridge B4) with the 23S rRNA of the 50S subunit in the ribosome. In Pseudomonas fluorescens (strain ATCC BAA-477 / NRRL B-23932 / Pf-5), this protein is Small ribosomal subunit protein uS15.